A 64-amino-acid polypeptide reads, in one-letter code: Conotoxin reg3k (64 aa).

Residues 1–20 form the signal peptide; it reads MMFKLGVLLTICLLLFPLTA. Positions 21 to 48 are excised as a propeptide; it reads LQLDWDQPGDHMLDISSEIDDRWFDPVR. 3 cysteine pairs are disulfide-bonded: cysteine 50–cysteine 60, cysteine 51–cysteine 58, and cysteine 56–cysteine 61. Proline 59 carries the post-translational modification 4-hydroxyproline.

Expressed by the venom duct.

The protein localises to the secreted. In Conus regius (Crown cone), this protein is Conotoxin reg3k.